The primary structure comprises 441 residues: Polycomb protein EED (441 aa).

The tract at residues 1-72 (MSEREVSTVP…PGRKSWGKGK (72 aa)) is disordered. Position 2 is an N-acetylserine (serine 2). Residues serine 2 and serine 34 each carry the phosphoserine modification. The span at 45-61 (ESGTNTERPDTPTNTPN) shows a compositional bias: polar residues. The residue at position 55 (threonine 55) is a Phosphothreonine. Lysine 66 is subject to N6,N6,N6-trimethyllysine; alternate. Residue lysine 66 is modified to N6,N6-dimethyllysine; alternate. Lysine 66 bears the N6-methyllysine; alternate mark. An interaction with EZH2 region spans residues 81-441 (SFKCVNSLKE…ASIWRWDRLR (361 aa)). WD repeat units lie at residues 91–134 (DHNQ…EIRL), 142–185 (DADE…CIKH), 188–228 (GHGN…LVAI), and 234–275 (GHRD…NAIK). N6,N6,N6-trimethyllysine; alternate is present on residues lysine 197, lysine 268, and lysine 284. Residues lysine 197, lysine 268, and lysine 284 each carry the N6,N6-dimethyllysine; alternate modification. N6-methyllysine; alternate occurs at positions 197, 268, and 284. 3 WD repeats span residues 304-341 (IHRNYVDCVRWLGDLILSKSCENAIVCWKPGKMEDDID), 359-399 (SQCD…PHKA), and 408-441 (KCGAAIRQTSFSRDSSILIAVCDDASIWRWDRLR).

This sequence belongs to the WD repeat ESC family. In terms of assembly, component of the PRC2/EED-EZH2 complex, which includes EED, EZH2, SUZ12, RBBP4 and RBBP7 and possibly AEBP2. The minimum components required for methyltransferase activity of the PRC2/EED-EZH2 complex are EED, EZH2 and SUZ12. Component of the PRC2/EED-EZH1 complex, which includes EED, EZH1, SUZ12, RBBP4 and AEBP2. The PRC2 complex may also interact with DNMT1, DNMT3A, DNMT3B and PHF1 via the EZH2 subunit and with SIRT1 via the SUZ12 subunit. Interacts with HDAC, HDAC2, histone H1, KMT2A/MLL1 and YY1. May interact with ITGA4, ITGAE and ITGB7. Interacts with CDYL. Interacts with BMAL1. In terms of processing, methylated. Binding to histone H1 'Lys-26' promotes mono-, di-, and trimethylation of internal lysines.

It localises to the nucleus. In terms of biological role, polycomb group (PcG) protein. Component of the PRC2/EED-EZH2 complex, which methylates 'Lys-9' and 'Lys-27' of histone H3, leading to transcriptional repression of the affected target gene. Also recognizes 'Lys-26' trimethylated histone H1 with the effect of inhibiting PRC2 complex methyltransferase activity on nucleosomal histone H3 'Lys-27', whereas H3 'Lys-27' recognition has the opposite effect, enabling the propagation of this repressive mark. The PRC2/EED-EZH2 complex may also serve as a recruiting platform for DNA methyltransferases, thereby linking two epigenetic repression systems. This Bos taurus (Bovine) protein is Polycomb protein EED (EED).